The following is an 806-amino-acid chain: Sucrose synthase (806 aa).

The interval 275–752 is GT-B glycosyltransferase; sequence MVFNVVILSP…GLQRIEEKYT (478 aa).

The protein belongs to the glycosyltransferase 1 family. Plant sucrose synthase subfamily.

It catalyses the reaction an NDP-alpha-D-glucose + D-fructose = a ribonucleoside 5'-diphosphate + sucrose + H(+). Its function is as follows. Sucrose-cleaving enzyme that provides UDP-glucose and fructose for various metabolic pathways. The chain is Sucrose synthase (SUCS) from Vicia faba (Broad bean).